A 346-amino-acid chain; its full sequence is MVVESSSSPIIPGLTDDVAELCVSKIPRSSFQITSQVCRRWRSFLRSQHFAAVRKLTGTVEEFLCVLMESECGRDVYWEVFDASGNKLGQIPPVPGPLKRGFGVAVLDGGKIVFFGGYTEVEGSGINSTTVSASADVYEFDPANNSWRKLAGMNIPRYNFAFAEVNGLLYVIRGYSTDTYSLSNAEVYNPKTNQWSLMHCPNRPVWRGFAFAFSSKLYAVGNGSRFIDIYDPKTQTWEELNSEQSVSVYSYTVVRNKVYFMDRNMPGRLGVFDPEENSWSSVFVPPREGGFWVRLGVWNNKVLLFSRVCGHETLMYDLDKEKGSKWRVCDQIKPSASQLASVLINF.

The F-box domain occupies 9–56; the sequence is PIIPGLTDDVAELCVSKIPRSSFQITSQVCRRWRSFLRSQHFAAVRKL. Kelch repeat units follow at residues 62-109, 111-167, 168-215, 217-257, and 259-300; these read EFLC…VLDG, KIVF…EVNG, LLYV…AFSS, LYAV…VRNK, and YFMD…VWNN.

The protein is Putative F-box/kelch-repeat protein At1g27420 of Arabidopsis thaliana (Mouse-ear cress).